Consider the following 38-residue polypeptide: Large ribosomal subunit protein bL36A (38 aa).

Belongs to the bacterial ribosomal protein bL36 family.

This Prochlorococcus marinus (strain MIT 9515) protein is Large ribosomal subunit protein bL36A.